Consider the following 218-residue polypeptide: Tegument protein UL51 homolog (218 aa).

Cysteine 11 is lipidated: S-palmitoyl cysteine; by host. The disordered stretch occupies residues alanine 199–threonine 218.

Belongs to the herpesviridae UL51 family. In terms of assembly, homodimer. Interacts with BBRF2; the BBRF2-BSRF1 complexes oligomerize which might play a role in tethering the viral nucleocapsids to the host Golgi membrane during secondary envelopment. Interacts with BGLF3.5. Interacts with BALF1. Interacts with glycoprotein gB. Interacts with glycoprotein heterodimer gH/gL. Phosphorylated. Post-translationally, palmitoylation is necessary for Golgi localization.

It localises to the host cytoplasm. The protein resides in the virion. The protein localises to the host Golgi apparatus. Its function is as follows. Plays several roles during the time course of infection, including egress of virus particles from the perinuclear space and secondary envelopment of cytoplasmic capsids that bud into specific trans-Golgi network (TGN)-derived membranes. This is Tegument protein UL51 homolog from Homo sapiens (Human).